Consider the following 134-residue polypeptide: Putative oxidoreductase CatD (134 aa).

A run of 4 helical transmembrane segments spans residues 5–25 (FEIGTLLLRVITGIIFFVHGL), 46–66 (FMAYVIAAIELIGGVLVFFGL), 70–90 (IVGVLFALTLIGAIITVKLKA), and 91–111 (PFMGNAEFDYLLLLTSIHLAL).

It belongs to the DoxX family.

Its subcellular location is the cell membrane. Essential for growth and viability in the presence of catechol and probably involved in the detoxification of catechol. This chain is Putative oxidoreductase CatD (catD), found in Bacillus subtilis (strain 168).